The chain runs to 80 residues: UPF0291 protein llmg_1475 (80 aa).

This sequence belongs to the UPF0291 family.

It localises to the cytoplasm. The chain is UPF0291 protein llmg_1475 from Lactococcus lactis subsp. cremoris (strain MG1363).